Reading from the N-terminus, the 90-residue chain is MACPLDQAIGLLVAIFHKYSGREGDKHTLSKKELKELIQKELTIGSKLQDAEIARLMEDLDRNKDQEVNFQEYVTFLGALALIYNEALKG.

EF-hand domains follow at residues Leu-12–Lys-47 and Leu-48–Ile-83. Ca(2+) contacts are provided by Thr-28 and Glu-33. Lys-40 is modified (N6-acetyllysine). Ser-46 is modified (phosphoserine). An N6-acetyllysine; alternate modification is found at Lys-47. N6-succinyllysine; alternate is present on Lys-47. Residues Asp-61, Asn-63, Asp-65, Glu-67, and Glu-72 each coordinate Ca(2+).

The protein belongs to the S-100 family. In terms of assembly, homodimer; head to tail assembly of 2 subunits. Interacts with CACYBP in a calcium-dependent manner. Interacts with ANXA2 and ANXA11 (via N-terminus). Interacts with SUGT1. Interacts with TP53; has higher affinity for TP53 that is phosphorylated on its N-terminal domain, and lower affinity for TP53 that is phosphorylated on its C-terminal domain. Interacts with tropomyosin. Interacts with FKBP4. Interacts with PPP5C (via TPR repeats); the interaction is calcium-dependent and modulates PPP5C activity. Interacts with TPPP; this interaction inhibits TPPP dimerization. In terms of processing, the N-terminus is blocked.

The protein localises to the nucleus envelope. It localises to the cytoplasm. It is found in the cell membrane. May function as calcium sensor and modulator, contributing to cellular calcium signaling. May function by interacting with other proteins, such as TPR-containing proteins, and indirectly play a role in many physiological processes such as the reorganization of the actin cytoskeleton and in cell motility. Binds 2 calcium ions. Calcium binding is cooperative. The chain is Protein S100-A6 (S100A6) from Homo sapiens (Human).